The primary structure comprises 530 residues: T-complex protein 1 subunit zeta (530 aa).

Gly38 contributes to the ADP binding site. Residue Gly38 coordinates ATP. Residue Asp89 coordinates Mg(2+). ADP-binding residues include Gly90, Thr91, Thr92, Ser93, Thr157, Lys158, and Ala410. ATP is bound by residues Gly90, Thr91, and Thr92. 4 residues coordinate ATP: Ala410, Gly411, Asp495, and Lys500. Asp495 lines the ADP pocket.

As to quaternary structure, component of the chaperonin-containing T-complex (TRiC), a hexadecamer composed of two identical back-to-back stacked rings enclosing a protein folding chamber. Each ring is made up of eight different subunits: TCP1/CCT1, CCT2, CCT3, CCT4, CCT5, CCT6A/CCT6, CCT7, CCT8. Interacts with PACRG.

Its subcellular location is the cytoplasm. The enzyme catalyses ATP + H2O = ADP + phosphate + H(+). Functionally, component of the chaperonin-containing T-complex (TRiC), a molecular chaperone complex that assists the folding of actin, tubulin and other proteins upon ATP hydrolysis. The chain is T-complex protein 1 subunit zeta from Gallus gallus (Chicken).